A 509-amino-acid chain; its full sequence is Steroid 17-alpha-hydroxylase/17,20 lyase (509 aa).

Position 202 (Asn202) interacts with substrate. Heme is bound at residue Cys442.

The protein belongs to the cytochrome P450 family. The cofactor is heme.

The protein localises to the endoplasmic reticulum membrane. It localises to the microsome membrane. The enzyme catalyses a C21-steroid + reduced [NADPH--hemoprotein reductase] + O2 = a 17alpha-hydroxy-C21-steroid + oxidized [NADPH--hemoprotein reductase] + H2O + H(+). The catalysed reaction is progesterone + reduced [NADPH--hemoprotein reductase] + O2 = 17alpha-hydroxyprogesterone + oxidized [NADPH--hemoprotein reductase] + H2O + H(+). It carries out the reaction pregnenolone + reduced [NADPH--hemoprotein reductase] + O2 = 17alpha-hydroxypregnenolone + oxidized [NADPH--hemoprotein reductase] + H2O + H(+). It catalyses the reaction 17alpha-hydroxyprogesterone + reduced [NADPH--hemoprotein reductase] + O2 = androst-4-ene-3,17-dione + acetate + oxidized [NADPH--hemoprotein reductase] + H2O + 2 H(+). The enzyme catalyses 17alpha-hydroxyprogesterone + reduced [NADPH--hemoprotein reductase] + O2 = 16alpha,17alpha-dihydroxyprogesterone + oxidized [NADPH--hemoprotein reductase] + H2O + H(+). The catalysed reaction is 16alpha,17alpha-dihydroxyprogesterone + reduced [NADPH--hemoprotein reductase] + O2 = 6beta,16alpha,17alpha-trihydroxyprogesterone + oxidized [NADPH--hemoprotein reductase] + H2O + H(+). It carries out the reaction 17alpha-hydroxypregnenolone + reduced [NADPH--hemoprotein reductase] + O2 = 3beta-hydroxyandrost-5-en-17-one + acetate + oxidized [NADPH--hemoprotein reductase] + H2O + 2 H(+). It catalyses the reaction 16alpha,17alpha-dihydroxypregnenolone + reduced [NADPH--hemoprotein reductase] + O2 = 3beta,16alpha-dihydroxy-androst-5-en-17-one + acetate + oxidized [NADPH--hemoprotein reductase] + H2O + 2 H(+). The enzyme catalyses 3beta-hydroxyandrost-5-en-17-one + reduced [NADPH--hemoprotein reductase] + O2 = 3beta,16alpha-dihydroxy-androst-5-en-17-one + oxidized [NADPH--hemoprotein reductase] + H2O + H(+). The catalysed reaction is androst-4-ene-3,17-dione + reduced [NADPH--hemoprotein reductase] + O2 = 16alpha-hydroxyandrost-4-ene-3,17-dione + oxidized [NADPH--hemoprotein reductase] + H2O + H(+). It functions in the pathway steroid hormone biosynthesis. The protein operates within steroid biosynthesis; glucocorticoid biosynthesis. Regulated predominantly by intracellular cAMP levels. The 17,20-lyase activity is stimulated by cytochrome b5, which acts as an allosteric effector increasing the Vmax of the lyase activity. In terms of biological role, a cytochrome P450 monooxygenase involved in corticoid and androgen biosynthesis. Catalyzes 17-alpha hydroxylation of C21 steroids, which is common for both pathways. A second oxidative step, required only for androgen synthesis, involves an acyl-carbon cleavage. The 17-alpha hydroxy intermediates, as part of adrenal glucocorticoids biosynthesis pathway, are precursors of cortisol. Hydroxylates steroid hormones, pregnenolone and progesterone to form 17-alpha hydroxy metabolites, followed by the cleavage of the C17-C20 bond to form C19 steroids, dehydroepiandrosterone (DHEA) and androstenedione. Has 16-alpha hydroxylase activity. Catalyzes 16-alpha hydroxylation of 17-alpha hydroxy pregnenolone, followed by the cleavage of the C17-C20 bond to form 16-alpha-hydroxy DHEA. Also 16-alpha hydroxylates androgens, relevant for estriol synthesis. Mechanistically, uses molecular oxygen inserting one oxygen atom into a substrate, and reducing the second into a water molecule, with two electrons provided by NADPH via cytochrome P450 reductase (CPR; NADPH-ferrihemoprotein reductase). In Ovis aries (Sheep), this protein is Steroid 17-alpha-hydroxylase/17,20 lyase (CYP17A1).